Here is a 345-residue protein sequence, read N- to C-terminus: Dihydroorotate dehydrogenase (quinone) (345 aa).

Residues 65–69 and threonine 89 contribute to the FMN site; that span reads AGLDK. Residue lysine 69 participates in substrate binding. 114-118 contacts substrate; the sequence is NRMGF. Residues asparagine 142 and asparagine 175 each contribute to the FMN site. Substrate is bound at residue asparagine 175. Catalysis depends on serine 178, which acts as the Nucleophile. Asparagine 180 contacts substrate. Residues lysine 220 and threonine 248 each coordinate FMN. Substrate is bound at residue 249–250; sequence NT. Residues glycine 271, glycine 300, and 321 to 322 contribute to the FMN site; that span reads YT.

Belongs to the dihydroorotate dehydrogenase family. Type 2 subfamily. Monomer. FMN is required as a cofactor.

It localises to the cell membrane. The catalysed reaction is (S)-dihydroorotate + a quinone = orotate + a quinol. It functions in the pathway pyrimidine metabolism; UMP biosynthesis via de novo pathway; orotate from (S)-dihydroorotate (quinone route): step 1/1. Functionally, catalyzes the conversion of dihydroorotate to orotate with quinone as electron acceptor. This is Dihydroorotate dehydrogenase (quinone) from Burkholderia multivorans (strain ATCC 17616 / 249).